We begin with the raw amino-acid sequence, 48 residues long: Protein TUNAR (48 aa).

A disordered region spans residues 1–20 (MVITSGNDEDRGGQEKESKE). Positions 8-20 (DEDRGGQEKESKE) are enriched in basic and acidic residues. Residues 24-44 (LAMLGIIGTILNLIVIIFVYI) form a helical membrane-spanning segment.

As to quaternary structure, interacts with ATPase ATP2A2/SERCA2. Interacts with ATPase ATP2A3/SERCA3; the interaction occurs at low levels in low glucose conditions and is increased by high glucose levels. As to expression, in the adult, expressed in Purkinje cells in the cerebellum, in motor neurons and interneurons in the spinal cord and in neurons of the cortex, hippocampus and thalamus (at protein level). Also detected in the developing cortex, hippocampus and thalamus at embryonic day E15.5 (at protein level).

The protein localises to the endoplasmic reticulum membrane. It is found in the extracellular vesicle membrane. In neurons, plays a role in the regulation of intracellular Ca(2+), possibly by acting as an activator of ATP2A2/SERCA2, thus increasing the efficiency with which Ca(2+) is removed from the cytoplasm. Inhibits differentiation of embryonic stem cells into neurons and inhibits neurite outgrowth, likely as a result of its role in intracellular Ca(2+) regulation. In pancreatic beta cells, lowers Ca(2+) levels in the endoplasmic reticulum and enhances glucose-stimulated insulin secretion. The polypeptide is Protein TUNAR (Mus musculus (Mouse)).